Reading from the N-terminus, the 222-residue chain is Oligoribonuclease (222 aa).

Residues 19–38 are disordered; sequence PMASSSSTGKQEESVNGSLE. A compositionally biased stretch (polar residues) spans 21–35; that stretch reads ASSSSTGKQEESVNG. Residues 46-210 enclose the Exonuclease domain; that stretch reads LVWIDLEMTG…DDIRESIKEL (165 aa). His167 is an active-site residue.

This sequence belongs to the oligoribonuclease family.

3'-to-5' exoribonuclease specific for small oligoribonucleotides. The chain is Oligoribonuclease from Arabidopsis thaliana (Mouse-ear cress).